We begin with the raw amino-acid sequence, 361 residues long: U7 snRNA-associated Sm-like protein LSm11 (361 aa).

The interval 1–26 (MEEREWGARSARAGSPASPPSPRLDV) is disordered. A phosphoserine mark is found at S15 and S21. The residue at position 41 (R41) is an Omega-N-methylarginine. The interval 67–142 (RTGRGRARGT…QGPGRSKKAP (76 aa)) is disordered. The segment covering 76-96 (TGEPASAGTSTGTSTGAGSSS) has biased composition (low complexity). A Glycyl lysine isopeptide (Lys-Gly) (interchain with G-Cter in SUMO2) cross-link involves residue K121. Phosphoserine is present on S155. The region spanning 155–230 (SPLGELHRCI…LTLTRLFDRL (76 aa)) is the Sm domain. Residues 172 to 205 (VHIRTFKGLRGVCTGFLVAFDKFWNMALTDVDET) are SM 1. A disordered region spans residues 268 to 335 (RGDTDRSSHR…RKKKRKPKVD (68 aa)). The residue at position 281 (S281) is a Phosphoserine. Over residues 307–323 (GSSVGGTFSRATTLSRG) the composition is skewed to polar residues. Residues 344-357 (INQIFIRGENVLLV) are SM 2.

It belongs to the snRNP Sm proteins family. Component of the heptameric ring U7 snRNP complex, or U7 Sm protein core complex, at least composed of LSM10, LSM11, SNRPB, SNRPD3, SNRPE, SNRPF, SNRPG and U7 snRNA. Formation of the U7 snRNP is an ATP-dependent process mediated by a specialized SMN complex containing at least the Sm protein core complex and additionally, the U7-specific LSM10 and LSM11 proteins. Identified in a histone pre-mRNA complex, at least composed of ERI1, LSM11, SLBP, SNRPB, SYNCRIP and YBX1. Interacts (via the Sm domains) with CLNS1A. Interacts with PRMT5, SMN, ZNF473 and WDR77. Post-translationally, not methylated.

The protein localises to the nucleus. Functionally, component of the U7 snRNP complex that is involved in the histone 3'-end pre-mRNA processing. Increases U7 snRNA levels but not histone 3'-end pre-mRNA processing activity, when overexpressed. Required for cell cycle progression from G1 to S phases. Binds specifically to the Sm-binding site of U7 snRNA. The protein is U7 snRNA-associated Sm-like protein LSm11 of Mus musculus (Mouse).